The following is a 423-amino-acid chain: UDP-N-acetylglucosamine 1-carboxyvinyltransferase (423 aa).

22–23 (KN) provides a ligand contact to phosphoenolpyruvate. Arg-93 contacts UDP-N-acetyl-alpha-D-glucosamine. Cys-117 serves as the catalytic Proton donor. A 2-(S-cysteinyl)pyruvic acid O-phosphothioketal modification is found at Cys-117. UDP-N-acetyl-alpha-D-glucosamine contacts are provided by residues 122 to 126 (RPIDL), Asp-307, and Val-329.

This sequence belongs to the EPSP synthase family. MurA subfamily.

Its subcellular location is the cytoplasm. The catalysed reaction is phosphoenolpyruvate + UDP-N-acetyl-alpha-D-glucosamine = UDP-N-acetyl-3-O-(1-carboxyvinyl)-alpha-D-glucosamine + phosphate. It functions in the pathway cell wall biogenesis; peptidoglycan biosynthesis. Functionally, cell wall formation. Adds enolpyruvyl to UDP-N-acetylglucosamine. This Chlorobium chlorochromatii (strain CaD3) protein is UDP-N-acetylglucosamine 1-carboxyvinyltransferase.